Reading from the N-terminus, the 272-residue chain is Undecaprenyl-diphosphatase (272 aa).

8 consecutive transmembrane segments (helical) span residues 6–26 (SLLV…LPVS), 45–65 (AKTF…VMFW), 89–109 (LSLI…LVFH), 115–135 (LFNP…LIIA), 156–176 (AFFI…RSGA), 189–209 (YAAS…ATAL), 221–241 (ADLP…LVAI), and 251–271 (ISFI…FAVF).

It belongs to the UppP family.

Its subcellular location is the cell inner membrane. The enzyme catalyses di-trans,octa-cis-undecaprenyl diphosphate + H2O = di-trans,octa-cis-undecaprenyl phosphate + phosphate + H(+). Functionally, catalyzes the dephosphorylation of undecaprenyl diphosphate (UPP). Confers resistance to bacitracin. The sequence is that of Undecaprenyl-diphosphatase from Cronobacter sakazakii (strain ATCC BAA-894) (Enterobacter sakazakii).